The primary structure comprises 161 residues: 2-C-methyl-D-erythritol 2,4-cyclodiphosphate synthase (161 aa).

A divalent metal cation contacts are provided by Asp-10 and His-12. 4-CDP-2-C-methyl-D-erythritol 2-phosphate-binding positions include Asp-10–His-12 and His-36–Ser-37. His-44 contacts a divalent metal cation. 4-CDP-2-C-methyl-D-erythritol 2-phosphate contacts are provided by residues Asp-58–Gly-60, Phe-63–Asp-67, and Arg-144.

Belongs to the IspF family. As to quaternary structure, homotrimer. A divalent metal cation serves as cofactor.

It carries out the reaction 4-CDP-2-C-methyl-D-erythritol 2-phosphate = 2-C-methyl-D-erythritol 2,4-cyclic diphosphate + CMP. The protein operates within isoprenoid biosynthesis; isopentenyl diphosphate biosynthesis via DXP pathway; isopentenyl diphosphate from 1-deoxy-D-xylulose 5-phosphate: step 4/6. Its function is as follows. Involved in the biosynthesis of isopentenyl diphosphate (IPP) and dimethylallyl diphosphate (DMAPP), two major building blocks of isoprenoid compounds. Catalyzes the conversion of 4-diphosphocytidyl-2-C-methyl-D-erythritol 2-phosphate (CDP-ME2P) to 2-C-methyl-D-erythritol 2,4-cyclodiphosphate (ME-CPP) with a corresponding release of cytidine 5-monophosphate (CMP). This chain is 2-C-methyl-D-erythritol 2,4-cyclodiphosphate synthase, found in Burkholderia ambifaria (strain MC40-6).